Consider the following 892-residue polypeptide: Zinc finger protein 512B (892 aa).

Residues 1–82 (MTDPFCVGGR…KKGRPKAENQ (82 aa)) are disordered. Residues 8–19 (GGRRLPGSSKSG) show a composition bias toward low complexity. The C2H2-type 1; atypical zinc finger occupies 105 to 129 (VKCPNSGCWLEFPSIYGLKYHYQRC). Residues 140–163 (FPCPFCEAAFTSKTQLEKHRIWNH) form a C2H2-type 2 zinc finger. Disordered regions lie at residues 323–473 (MVLL…RKKV) and 562–582 (EHSA…EERE). Residues 371–384 (SMGQSSAFQLSADT) show a composition bias toward polar residues. Positions 385–398 (SSGSLSPGSRPSGG) are enriched in low complexity. Serine 409 bears the Phosphoserine mark. The span at 418–428 (TKHRRKQKTPK) shows a compositional bias: basic residues. Positions 421 to 427 (RRKQKTP) match the NuRD interaction motif motif. A C2H2-type 3 zinc finger spans residues 540 to 563 (LKCQHCRKQFKSKAGLNYHTMAEH). A C2H2-type 4; atypical zinc finger spans residues 594-618 (LRCPQEGCGAAFSSLMGYQYHQRRC). The C2H2-type 5 zinc finger occupies 630 to 653 (FPCTHCGKTYRSKAGHDYHVRSEH). Residues 649 to 682 (VRSEHTAPPPEEPTDKSPEAEDPLGVERTPSGRV) are disordered. Serine 686 is modified (phosphoserine). The C2H2-type 6; atypical zinc-finger motif lies at 750-774 (VNCPNDCCEAIYSSVSGLKAHLASC). A C2H2-type 7 zinc finger spans residues 784–807 (YRCLLCPKEFSSESGVKYHILKTH). Residues 812-892 (FRTSADPPPK…KVGVSKAPEK (81 aa)) are disordered. Over residues 819–831 (PPKHRSQDSLVPK) the composition is skewed to basic and acidic residues. The segment covering 832–849 (KEKKKNLAGGKKRGRKPK) has biased composition (basic residues). A compositionally biased stretch (basic and acidic residues) spans 850–876 (ERTPEEPVAKLPPRRDDWPPGCRDKGA).

This sequence belongs to the krueppel C2H2-type zinc-finger protein family. In terms of assembly, interacts (via its NuRD interaction motif) with RBBP4 of the nucleosome remodeling and deacetylase (NuRD) complex; the interaction is direct and may play a role in repressing gene expression.

It is found in the nucleus. Involved in transcriptional regulation by repressing gene expression. Associates with the nucleosome remodeling and histone deacetylase (NuRD) complex, which promotes transcriptional repression by histone deacetylation and nucleosome remodeling. This is Zinc finger protein 512B (ZNF512B) from Homo sapiens (Human).